We begin with the raw amino-acid sequence, 291 residues long: Arabinogalactan O-methyltransferase 2 (291 aa).

The chain crosses the membrane as a helical span at residues 18-38 (WFLAVALAGLIGGAMLITSFI).

Belongs to the methyltransferase superfamily.

It localises to the golgi apparatus membrane. Involved in the methylation of glucuronic acid of different plant cell wall component, but mainly on side chains of arabinogalactans. The polypeptide is Arabinogalactan O-methyltransferase 2 (Arabidopsis thaliana (Mouse-ear cress)).